We begin with the raw amino-acid sequence, 188 residues long: Large ribosomal subunit protein uL5 (188 aa).

This sequence belongs to the universal ribosomal protein uL5 family. As to quaternary structure, part of the 50S ribosomal subunit; contacts the 5S rRNA and probably tRNA. Forms a bridge to the 30S subunit in the 70S ribosome.

This is one of the proteins that bind and probably mediate the attachment of the 5S RNA into the large ribosomal subunit, where it forms part of the central protuberance. In the 70S ribosome it contacts protein S13 of the 30S subunit (bridge B1b), connecting the 2 subunits; this bridge is implicated in subunit movement. May contact the P site tRNA; the 5S rRNA and some of its associated proteins might help stabilize positioning of ribosome-bound tRNAs. The chain is Large ribosomal subunit protein uL5 from Pyrococcus abyssi (strain GE5 / Orsay).